Consider the following 466-residue polypeptide: Dihydrolipoyl dehydrogenase (466 aa).

FAD is bound by residues 34–42 (ERVHLGGIC), Lys-51, and Gly-114. Cysteines 42 and 47 form a disulfide. Residues 180–184 (GSGAI), Glu-203, and 269–272 (AIGV) contribute to the NAD(+) site. Residues Asp-311 and Ala-319 each coordinate FAD. His-445 functions as the Proton acceptor in the catalytic mechanism.

This sequence belongs to the class-I pyridine nucleotide-disulfide oxidoreductase family. As to quaternary structure, homodimer. The cofactor is FAD.

It localises to the cytoplasm. The enzyme catalyses N(6)-[(R)-dihydrolipoyl]-L-lysyl-[protein] + NAD(+) = N(6)-[(R)-lipoyl]-L-lysyl-[protein] + NADH + H(+). Functionally, lipoamide dehydrogenase is a component of the alpha-ketoacid dehydrogenase complexes. The protein is Dihydrolipoyl dehydrogenase (lpd) of Zymomonas mobilis subsp. mobilis (strain ATCC 31821 / ZM4 / CP4).